We begin with the raw amino-acid sequence, 321 residues long: Biotin synthase (321 aa).

Positions phenylalanine 45–alanine 271 constitute a Radical SAM core domain. [4Fe-4S] cluster is bound by residues cysteine 63, cysteine 67, and cysteine 70. [2Fe-2S] cluster-binding residues include cysteine 106, cysteine 139, cysteine 199, and arginine 269.

It belongs to the radical SAM superfamily. Biotin synthase family. As to quaternary structure, homodimer. [4Fe-4S] cluster serves as cofactor. [2Fe-2S] cluster is required as a cofactor.

It carries out the reaction (4R,5S)-dethiobiotin + (sulfur carrier)-SH + 2 reduced [2Fe-2S]-[ferredoxin] + 2 S-adenosyl-L-methionine = (sulfur carrier)-H + biotin + 2 5'-deoxyadenosine + 2 L-methionine + 2 oxidized [2Fe-2S]-[ferredoxin]. It participates in cofactor biosynthesis; biotin biosynthesis; biotin from 7,8-diaminononanoate: step 2/2. Its function is as follows. Catalyzes the conversion of dethiobiotin (DTB) to biotin by the insertion of a sulfur atom into dethiobiotin via a radical-based mechanism. This chain is Biotin synthase, found in Staphylococcus haemolyticus (strain JCSC1435).